Consider the following 226-residue polypeptide: uncharacterized protein (226 aa).

Residues 71 to 207 enclose the RNase H type-1 domain; that stretch reads EPDDITVYFD…ADGLAKKILS (137 aa).

This is an uncharacterized protein from Bacillus subtilis (strain 168).